We begin with the raw amino-acid sequence, 301 residues long: MTRHGKNCTAGAVYTYHEKKKDTAASGYGTQNIRLSRDAVKDFDCCCLSLQPCHDPVVTPDGYLYEREAILEYILHQKKEIARQMKAYEKQRGTRREEQKELQRAASQDHVRGFLEKESAIVSRPLNPFTAKALSGTSPDDVQPGPSVGPPSKDKDKVLPSFWIPSLTPEAKATKLEKPSRTVTCPMSGKPLRMSDLTPVHFTPLDSSVDRVGLITRSERYVCAVTRDSLSNATPCAVLRPSGAVVTLECVEKLIRKDMVDPVTGDKLTDRDIIVLQRGGTGFAGSGVKLQAEKSRPVMQA.

A Phosphoserine modification is found at S36. Residues 55–75 (DPVVTPDGYLYEREAILEYIL) form a U-box-like region. The Nuclear localization signal signature appears at 78–101 (KKEIARQMKAYEKQRGTRREEQKE). A Phosphoserine modification is found at S107. Residues 132-157 (KALSGTSPDDVQPGPSVGPPSKDKDK) are disordered.

Belongs to the NOSIP family. As to quaternary structure, interacts with NOS1 and NOS3. Interacts with PP2A holoenzyme, containing PPP2CA, PPP2CB, PPP2R1A and PPP2R2A subunits. In terms of tissue distribution, expressed in heart, brain and lung. Present in endothelial cells (at protein level).

Its subcellular location is the cytoplasm. The protein localises to the nucleus. The enzyme catalyses S-ubiquitinyl-[E2 ubiquitin-conjugating enzyme]-L-cysteine + [acceptor protein]-L-lysine = [E2 ubiquitin-conjugating enzyme]-L-cysteine + N(6)-ubiquitinyl-[acceptor protein]-L-lysine.. Its function is as follows. E3 ubiquitin-protein ligase that is essential for proper development of the forebrain, the eye, and the face. Catalyzes monoubiquitination of serine/threonine-protein phosphatase 2A (PP2A) catalytic subunit PPP2CA/PPP2CB. Negatively regulates nitric oxide production by inducing NOS1 and NOS3 translocation to actin cytoskeleton and inhibiting their enzymatic activity. This chain is Nitric oxide synthase-interacting protein (NOSIP), found in Homo sapiens (Human).